The chain runs to 133 residues: ATP synthase epsilon chain (133 aa).

Belongs to the ATPase epsilon chain family. F-type ATPases have 2 components, CF(1) - the catalytic core - and CF(0) - the membrane proton channel. CF(1) has five subunits: alpha(3), beta(3), gamma(1), delta(1), epsilon(1). CF(0) has three main subunits: a, b and c.

The protein localises to the cell membrane. Its function is as follows. Produces ATP from ADP in the presence of a proton gradient across the membrane. The sequence is that of ATP synthase epsilon chain from Clostridium botulinum (strain Langeland / NCTC 10281 / Type F).